Reading from the N-terminus, the 142-residue chain is 3-hydroxyacyl-[acyl-carrier-protein] dehydratase FabZ (142 aa).

H50 is an active-site residue.

The protein belongs to the thioester dehydratase family. FabZ subfamily.

The protein resides in the cytoplasm. It carries out the reaction a (3R)-hydroxyacyl-[ACP] = a (2E)-enoyl-[ACP] + H2O. In terms of biological role, involved in unsaturated fatty acids biosynthesis. Catalyzes the dehydration of short chain beta-hydroxyacyl-ACPs and long chain saturated and unsaturated beta-hydroxyacyl-ACPs. The protein is 3-hydroxyacyl-[acyl-carrier-protein] dehydratase FabZ of Clostridium tetani (strain Massachusetts / E88).